The sequence spans 393 residues: Dual specificity mitogen-activated protein kinase kinase 1 (393 aa).

Residues 1–26 are disordered; it reads MPKKKPTPIQLNPTPDGSAVNGTSSA. Residues 9-26 are compositionally biased toward polar residues; the sequence is IQLNPTPDGSAVNGTSSA. The Protein kinase domain maps to 68–361; the sequence is FEKISELGAG…LKQLLVHAFI (294 aa). ATP contacts are provided by residues 74–82 and Lys-97; that span reads LGAGNGGVV. Residue Asp-190 is the Proton acceptor of the active site. Ser-218 and Ser-222 each carry phosphoserine; by RAF. The RAF1-binding stretch occupies residues 270 to 307; it reads ELELLFGCQVEGDAAETPPRPRTPGRPLSSYGMDSRPP. Residue Thr-286 is modified to Phosphothreonine. Residue Thr-292 is modified to Phosphothreonine; by MAPK1. Phosphoserine; by PAK is present on Ser-298.

Belongs to the protein kinase superfamily. STE Ser/Thr protein kinase family. MAP kinase kinase subfamily. As to quaternary structure, found in a complex with at least BRAF, HRAS, MAP2K1, MAPK3/ERK1 and RGS14. Forms a heterodimer with MAP2K2/MEK2. Forms heterodimers with KSR2 which further dimerize to form tetramers. Interacts with KSR1 or KSR2 and BRAF; the interaction with KSR1 or KSR2 mediates KSR1-BRAF or KSR2-BRAF dimerization. Interacts with ARBB2, LAMTOR3, MAPK1/ERK2 and RAF1. Interacts with MAPK1/ERK2. Interacts with MORG1. Interacts with PPARG. Interacts with isoform 1 of VRK2. Interacts with SGK1. Interacts with BIRC6/bruce. Interacts with KAT7; the interaction promotes KAT7 phosphorylation. Interacts with RAF1 and NEK10; the interaction is required for ERK1/2-signaling pathway activation in response to UV irradiation. Interacts with TRAF3IP3. Interacts with MOS. In terms of processing, phosphorylation at Ser-218 and Ser-222 by MAP kinase kinase kinases (BRAF or MEKK1) positively regulates the kinase activity. Also phosphorylated at Thr-292 by MAPK1/ERK2 and at Ser-298 by PAK. MAPK1/ERK2 phosphorylation of Thr-292 occurs in response to cellular adhesion and leads to inhibition of Ser-298 phosphorylation by PAK. Autophosphorylated at Ser-218 and Ser-222, autophosphosphorylation is promoted by NEK10 following UV irradiation.

The protein resides in the cytoplasm. It is found in the cytoskeleton. The protein localises to the microtubule organizing center. Its subcellular location is the centrosome. It localises to the spindle pole body. The protein resides in the nucleus. It is found in the membrane. The enzyme catalyses L-seryl-[protein] + ATP = O-phospho-L-seryl-[protein] + ADP + H(+). It carries out the reaction L-threonyl-[protein] + ATP = O-phospho-L-threonyl-[protein] + ADP + H(+). It catalyses the reaction L-tyrosyl-[protein] + ATP = O-phospho-L-tyrosyl-[protein] + ADP + H(+). Ras proteins such as HRAS mediate the activation of RAF proteins such as RAF1 or BRAF which in turn activate extracellular signal-regulated kinases (ERK) through MAPK (mitogen-activated protein kinases) and ERK kinases MAP2K1/MEK1 and MAP2K2/MEK2. Activation occurs through phosphorylation of Ser-218 and Ser-222. MAP2K1/MEK1 binds KSR1 or KSR2 releasing the inhibitory intramolecular interaction between KSR1 or KSR2 protein kinase and N-terminal domains. This allows KSR1 or KSR2 dimerization with BRAF leading to BRAF activation and phosphorylation of MAP2K1. MAP2K1/MEK1 is also the target of negative feed-back regulation by its substrate kinases, such as MAPK1/ERK2. These phosphorylate MAP2K1/MEK1 on Thr-292, thereby facilitating dephosphorylation of the activating residues Ser-218 and Ser-222. Inhibited by serine/threonine phosphatase 2A. Dual specificity protein kinase which acts as an essential component of the MAP kinase signal transduction pathway. Binding of extracellular ligands such as growth factors, cytokines and hormones to their cell-surface receptors activates RAS and this initiates RAF1 activation. RAF1 then further activates the dual-specificity protein kinases MAP2K1/MEK1 and MAP2K2/MEK2. Both MAP2K1/MEK1 and MAP2K2/MEK2 function specifically in the MAPK/ERK cascade, and catalyze the concomitant phosphorylation of a threonine and a tyrosine residue in a Thr-Glu-Tyr sequence located in the extracellular signal-regulated kinases MAPK3/ERK1 and MAPK1/ERK2, leading to their activation and further transduction of the signal within the MAPK/ERK cascade. Activates BRAF in a KSR1 or KSR2-dependent manner; by binding to KSR1 or KSR2 releases the inhibitory intramolecular interaction between KSR1 or KSR2 protein kinase and N-terminal domains which promotes KSR1 or KSR2-BRAF dimerization and BRAF activation. Depending on the cellular context, this pathway mediates diverse biological functions such as cell growth, adhesion, survival and differentiation, predominantly through the regulation of transcription, metabolism and cytoskeletal rearrangements. One target of the MAPK/ERK cascade is peroxisome proliferator-activated receptor gamma (PPARG), a nuclear receptor that promotes differentiation and apoptosis. MAP2K1/MEK1 has been shown to export PPARG from the nucleus. The MAPK/ERK cascade is also involved in the regulation of endosomal dynamics, including lysosome processing and endosome cycling through the perinuclear recycling compartment (PNRC), as well as in the fragmentation of the Golgi apparatus during mitosis. In Cricetulus griseus (Chinese hamster), this protein is Dual specificity mitogen-activated protein kinase kinase 1 (MAP2K1).